The following is a 109-amino-acid chain: ATPase inhibitor mai-2, mitochondrial (109 aa).

Disordered stretches follow at residues 17–39 (RFSTGGHGDGAGRGGGSGGSIRD) and 73–95 (QEVDHHKSQLENHQKVLDRHQKR). A compositionally biased stretch (gly residues) spans 21-35 (GGHGDGAGRGGGSGG). The stretch at 45–109 (GKMEAAREDE…EAEERALGKE (65 aa)) forms a coiled coil.

The protein belongs to the ATPase inhibitor family.

It is found in the mitochondrion. Its function is as follows. Thought to be a regulatory component of the ATP-synthesizing complex in the mitochondria. This Caenorhabditis briggsae protein is ATPase inhibitor mai-2, mitochondrial.